Consider the following 323-residue polypeptide: MIDFGNFYSLIAKNHLSHWLETLPAQIANWQREQQHGLFKQWSNAVEFLPEIKPYRLDLLHSVTAESEEPLSAGQIKRIETLMRNLMPWRKGPFSLYGVNIDTEWRSDWKWDRVMPHLSDLTGRTILDVGCGSGYHMWRMIGAGAHLAVGIDPTQLFLCQFEAVRKLLGNDQRAHLLPLGIEQLPALKAFDTVFSMGVLYHRRSPLEHLWQLKDQLVNEGELVLETLVIDGDENTVLVPGDRYAQMRNVYFIPSALALKNWLKKCGFVDIRIADVSVTTTEEQRRTEWMVTESLADFLDPHDPGKTVEGYPAPKRAVLIARKP.

Residues Lys-91, Trp-105, Lys-110, Gly-130, Asp-152–Thr-154, Ile-181–Glu-182, Met-196, Tyr-200, and Arg-315 contribute to the carboxy-S-adenosyl-L-methionine site.

Belongs to the class I-like SAM-binding methyltransferase superfamily. CmoB family. Homotetramer.

The enzyme catalyses carboxy-S-adenosyl-L-methionine + 5-hydroxyuridine(34) in tRNA = 5-carboxymethoxyuridine(34) in tRNA + S-adenosyl-L-homocysteine + H(+). Functionally, catalyzes carboxymethyl transfer from carboxy-S-adenosyl-L-methionine (Cx-SAM) to 5-hydroxyuridine (ho5U) to form 5-carboxymethoxyuridine (cmo5U) at position 34 in tRNAs. The protein is tRNA U34 carboxymethyltransferase of Escherichia coli O6:H1 (strain CFT073 / ATCC 700928 / UPEC).